The primary structure comprises 419 residues: NF-kappa-B essential modulator (419 aa).

A disordered region spans residues 1-48; it reads MSRPPWKSPLCEMVQPSGSPAGDQDMLGEESSLGKPAMLHVPSEQGTP. The required for interaction with and ubiquitination by MARCHF2 stretch occupies residues 1 to 197; that stretch reads MSRPPWKSPL…REALEQRHSV (197 aa). Serine 31 and serine 43 each carry phosphoserine; by IKKB. The interval 44-111 is interaction with CHUK/IKBKB; that stretch reads EQGTPETFQR…DLVVRLSLEK (68 aa). The stretch at 49 to 353 forms a coiled coil; it reads ETFQRCLEEN…KTSCQESARI (305 aa). A Phosphoserine modification is found at serine 68. Glycyl lysine isopeptide (Lys-Gly) (interchain with G-Cter in ubiquitin) cross-links involve residues lysine 111, lysine 139, lysine 143, lysine 226, lysine 246, and lysine 264. An interaction with TANK region spans residues 150–257; the sequence is LGELQESQSR…SMVSSERNRG (108 aa). Positions 242-350 are ubiquitin-binding (UBAN); that stretch reads DNHMKSSMVS…SRLKTSCQES (109 aa). The tract at residues 246–365 is self-association; sequence KSSMVSSERN…MRKRHVEVSQ (120 aa). The tract at residues 251–419 is required for interaction with TNFAIP3; the sequence is SSERNRGLQL…LQIHVMECIE (169 aa). Lysine 277 participates in a covalent cross-link: Glycyl lysine isopeptide (Lys-Gly) (interchain with G-Cter in SUMO); alternate. Lysine 277 participates in a covalent cross-link: Glycyl lysine isopeptide (Lys-Gly) (interchain with G-Cter in ubiquitin); alternate. Glycyl lysine isopeptide (Lys-Gly) (interchain with G-Cter in ubiquitin) cross-links involve residues lysine 283, lysine 285, lysine 292, and lysine 302. Lysine 309 is covalently cross-linked (Glycyl lysine isopeptide (Lys-Gly) (interchain with G-Cter in SUMO); alternate). A Glycyl lysine isopeptide (Lys-Gly) (interchain with G-Cter in ubiquitin); alternate cross-link involves residue lysine 309. Glycyl lysine isopeptide (Lys-Gly) (interchain with G-Cter in ubiquitin) cross-links involve residues lysine 321, lysine 325, and lysine 326. Residues 322 to 343 are leucine-zipper; it reads LAEKKEFLQEQLEQLQREYSRL. The segment at 356-394 is disordered; the sequence is MRKRHVEVSQPPLAPGPAHHSFHLNPSSQRRSPPDEPPK. Serine 376 is subject to Phosphoserine; by IKKB. Residues 382–419 are interaction with CYLD; the sequence is SSQRRSPPDEPPKFCCPKCQYQAPDIDTLQIHVMECIE. Serine 387 bears the Phosphoserine mark. The segment at 389 to 419 adopts a CCHC NOA-type zinc-finger fold; sequence PDEPPKFCCPKCQYQAPDIDTLQIHVMECIE. Cysteine 397 contacts Zn(2+). Lysine 399 participates in a covalent cross-link: Glycyl lysine isopeptide (Lys-Gly) (interchain with G-Cter in ubiquitin). Residues cysteine 400, histidine 413, and cysteine 417 each coordinate Zn(2+).

In terms of assembly, homodimer; disulfide-linked. Component of the I-kappa-B-kinase (IKK) core complex consisting of CHUK, IKBKB and IKBKG; probably four alpha/CHUK-beta/IKBKB dimers are associated with four gamma/IKBKG subunits. The IKK core complex seems to associate with regulatory or adapter proteins to form a IKK-signalosome holo-complex. The IKK complex associates with TERF2IP/RAP1, leading to promote IKK-mediated phosphorylation of RELA/p65. Part of a complex composed of NCOA2, NCOA3, CHUK/IKKA, IKBKB, IKBKG and CREBBP. Interacts with COPS3, CYLD, NALP2, TRPC4AP and PIDD1. Interacts with ATM; the complex is exported from the nucleus. Interacts with TRAF6. Interacts with IKBKE. Interacts with TANK; the interaction is enhanced by IKBKE and TBK1. Part of a ternary complex consisting of TANK, IKBKB and IKBKG. Interacts with ZFAND5. Interacts with RIPK2. Interacts with TNIP1 and TNFAIP3; TNIP1 facilitates the TNFAIP3-mediated de-ubiquitination of IKBKG. Interacts with TNFAIP3; the interaction is induced by TNF stimulation and by polyubiquitin. Binds (via UBAN region) polyubiquitin; binds both 'Lys-63'-linked and linear polyubiquitin, with higher affinity for linear ubiquitin. Interacts with NLRP10. Interacts with TANK; this interaction increases in response to DNA damage. Interacts with USP10; this interaction increases in response to DNA damage. Interacts with ZC3H12A; this interaction increases in response to DNA damage. Interacts with IFIT5; the interaction synergizes the recruitment of IKK to MAP3K7 and enhances IKK phosphorylation. Interacts with TRIM29; this interaction induces IKBKG/NEMO ubiquitination and proteolytic degradation. Interacts with TRIM13; this interaction leads to IKBKG/NEMO ubiquitination. Interacts with ARFIP2. Interacts with RIPK1. Interacts with (ubiquitinated) BCL10; interaction with polyubiquitinated BCL10 via both 'Lys-63'-linked and linear ubiquitin is required for TCR-induced NF-kappa-B activation. Interacts with MARCHF2; during the late stages of macrophage viral and bacterial infection; the interaction leads to ubiquitination and degradation of IKBKG/NEMO. In terms of processing, phosphorylation at Ser-68 attenuates aminoterminal homodimerization. Polyubiquitinated on Lys-285 through 'Lys-63'; the ubiquitination is mediated downstream of NOD2 and RIPK2 and probably plays a role in signaling by facilitating interactions with ubiquitin domain-containing proteins and activates the NF-kappa-B pathway. Polyubiquitinated on Lys-399 through 'Lys-63'; the ubiquitination is mediated by BCL10, MALT1 and TRAF6 and probably plays a role in signaling by facilitating interactions with ubiquitin domain-containing proteins and activates the NF-kappa-B pathway. Monoubiquitinated on Lys-277 and Lys-309; promotes nuclear export. Polyubiquitinated through 'Lys-27' by TRIM23; involved in antiviral innate and inflammatory responses. Linear polyubiquitinated on Lys-111, Lys-143, Lys-226, Lys-246, Lys-264, Lys-277, Lys-285, Lys-292, Lys-302, Lys-309 and Lys-326; the head-to-tail polyubiquitination is mediated by the LUBAC complex and plays a key role in NF-kappa-B activation. Deubiquitinated by USP10 in a TANK-dependent and -independent manner, leading to the negative regulation of NF-kappa-B signaling upon DNA damage. Ubiquitinated at Lys-326 by MARCHF2 following bacterial and viral infection which leads to its degradation. Polyubiquitinated via 'Lys-29'-linked ubiquitin; leading to lysosomal degradation. Post-translationally, sumoylated on Lys-277 and Lys-309 with SUMO1. In terms of processing, neddylated by TRIM40, resulting in stabilization of NFKBIA and down-regulation of NF-kappa-B activity.

Its subcellular location is the cytoplasm. It is found in the nucleus. In terms of biological role, regulatory subunit of the IKK core complex which phosphorylates inhibitors of NF-kappa-B thus leading to the dissociation of the inhibitor/NF-kappa-B complex and ultimately the degradation of the inhibitor. Its binding to scaffolding polyubiquitin plays a key role in IKK activation by multiple signaling receptor pathways. Can recognize and bind both 'Lys-63'-linked and linear polyubiquitin upon cell stimulation, with a much highr affinity for linear polyubiquitin. Could be implicated in NF-kappa-B-mediated protection from cytokine toxicity. Essential for viral activation of IRF3. Involved in TLR3- and IFIH1-mediated antiviral innate response; this function requires 'Lys-27'-linked polyubiquitination. This chain is NF-kappa-B essential modulator (IKBKG), found in Bos taurus (Bovine).